The following is a 266-amino-acid chain: Small ribosomal subunit protein uS2 (266 aa).

The protein belongs to the universal ribosomal protein uS2 family.

The polypeptide is Small ribosomal subunit protein uS2 (Bartonella tribocorum (strain CIP 105476 / IBS 506)).